The following is a 346-amino-acid chain: Holliday junction branch migration complex subunit RuvB (346 aa).

The large ATPase domain (RuvB-L) stretch occupies residues 1–182 (MSERLVTSNE…FGVLCSMEYY (182 aa)). Residues leucine 21, arginine 22, glycine 63, lysine 66, threonine 67, threonine 68, 129-131 (EDY), arginine 172, tyrosine 182, and arginine 219 contribute to the ATP site. Threonine 67 serves as a coordination point for Mg(2+). Residues 183-253 (TDEQLKEIII…AAKKSLEILE (71 aa)) form a small ATPAse domain (RuvB-S) region. A head domain (RuvB-H) region spans residues 256 to 346 (GEGFDRIDNK…DSKQCTLFEK (91 aa)). DNA contacts are provided by arginine 311 and arginine 316.

It belongs to the RuvB family. Homohexamer. Forms an RuvA(8)-RuvB(12)-Holliday junction (HJ) complex. HJ DNA is sandwiched between 2 RuvA tetramers; dsDNA enters through RuvA and exits via RuvB. An RuvB hexamer assembles on each DNA strand where it exits the tetramer. Each RuvB hexamer is contacted by two RuvA subunits (via domain III) on 2 adjacent RuvB subunits; this complex drives branch migration. In the full resolvosome a probable DNA-RuvA(4)-RuvB(12)-RuvC(2) complex forms which resolves the HJ.

The protein localises to the cytoplasm. It carries out the reaction ATP + H2O = ADP + phosphate + H(+). Functionally, the RuvA-RuvB-RuvC complex processes Holliday junction (HJ) DNA during genetic recombination and DNA repair, while the RuvA-RuvB complex plays an important role in the rescue of blocked DNA replication forks via replication fork reversal (RFR). RuvA specifically binds to HJ cruciform DNA, conferring on it an open structure. The RuvB hexamer acts as an ATP-dependent pump, pulling dsDNA into and through the RuvAB complex. RuvB forms 2 homohexamers on either side of HJ DNA bound by 1 or 2 RuvA tetramers; 4 subunits per hexamer contact DNA at a time. Coordinated motions by a converter formed by DNA-disengaged RuvB subunits stimulates ATP hydrolysis and nucleotide exchange. Immobilization of the converter enables RuvB to convert the ATP-contained energy into a lever motion, pulling 2 nucleotides of DNA out of the RuvA tetramer per ATP hydrolyzed, thus driving DNA branch migration. The RuvB motors rotate together with the DNA substrate, which together with the progressing nucleotide cycle form the mechanistic basis for DNA recombination by continuous HJ branch migration. Branch migration allows RuvC to scan DNA until it finds its consensus sequence, where it cleaves and resolves cruciform DNA. This Clostridium perfringens (strain ATCC 13124 / DSM 756 / JCM 1290 / NCIMB 6125 / NCTC 8237 / Type A) protein is Holliday junction branch migration complex subunit RuvB.